A 440-amino-acid polypeptide reads, in one-letter code: Putative short-chain fatty acid transporter (440 aa).

At 1–19 (MIGRISRFMTRFVSRWLPD) the chain is on the periplasmic side. Residues 20 to 40 (PLIFAMLLTLLTFVIALWLTP) form a helical membrane-spanning segment. Residues 41–53 (QTPISMVKMWGDG) lie on the Cytoplasmic side of the membrane. A helical membrane pass occupies residues 54–74 (FWNLLAFGMQMALIIVTGHAL). Topologically, residues 75–102 (ASSAPVKSLLRTAASAAKTPVQGVMLVT) are periplasmic. Residues 103–123 (FFGSVACVINWGFGLVVGAMF) form a helical membrane-spanning segment. Topologically, residues 124–137 (AREVARRVPGSDYP) are cytoplasmic. Transmembrane regions (helical) follow at residues 138–158 (LLIA…SGSM) and 159–179 (PLLA…IPVG). Residue Asp180 is a topological domain, cytoplasmic. A helical transmembrane segment spans residues 181–201 (TLFSGFNIFITVALIVVMPFI). The Periplasmic segment spans residues 202 to 244 (TRMMMPKPSDVVSIDPKLLMEEADFQKQLPKDAPPSERLEESR). 2 helical membrane passes run 245 to 265 (ILTL…FSEH) and 266 to 286 (GFNI…LLLH). Residues 287-313 (KTPMAYMRAISAAARSTAGILVQFPFY) are Periplasmic-facing. The helical transmembrane segment at 314–334 (AGIQLMMEHSGLGGLITEFFI) threads the bilayer. The Cytoplasmic portion of the chain corresponds to 335–351 (NVANKDTFPVMTFFSSA). A helical membrane pass occupies residues 352–372 (LINFAVPSGGGHWVIQGPFVI). Topologically, residues 373-394 (PAAQALGADLGKSVMAIAYGEQ) are periplasmic. Residues 395–415 (WMNMAQPFWALPALAIAGLGV) traverse the membrane as a helical segment. Over 416–419 (RDIM) the chain is Cytoplasmic. The chain crosses the membrane as a helical span at residues 420 to 440 (GYCITALLFSGVIFVIGLTLF).

It is found in the cell inner membrane. May be responsible for the uptake of short-chain fatty acids. This chain is Putative short-chain fatty acid transporter (atoE), found in Escherichia coli (strain K12).